Reading from the N-terminus, the 424-residue chain is Trigger factor (424 aa).

The PPIase FKBP-type domain occupies 163–248 (GNTVVLDFEG…IHEIKAKELP (86 aa)).

Belongs to the FKBP-type PPIase family. Tig subfamily.

Its subcellular location is the cytoplasm. It carries out the reaction [protein]-peptidylproline (omega=180) = [protein]-peptidylproline (omega=0). Involved in protein export. Acts as a chaperone by maintaining the newly synthesized protein in an open conformation. Functions as a peptidyl-prolyl cis-trans isomerase. The protein is Trigger factor (tig) of Bacillus subtilis (strain 168).